The following is a 276-amino-acid chain: 3-methyl-2-oxobutanoate hydroxymethyltransferase (276 aa).

Residues Asp-44 and Asp-83 each contribute to the Mg(2+) site. 3-methyl-2-oxobutanoate contacts are provided by residues 44–45 (DS), Asp-83, and Lys-113. Position 115 (Glu-115) interacts with Mg(2+). Glu-182 (proton acceptor) is an active-site residue.

The protein belongs to the PanB family. As to quaternary structure, homodecamer; pentamer of dimers. It depends on Mg(2+) as a cofactor.

It localises to the cytoplasm. The catalysed reaction is 3-methyl-2-oxobutanoate + (6R)-5,10-methylene-5,6,7,8-tetrahydrofolate + H2O = 2-dehydropantoate + (6S)-5,6,7,8-tetrahydrofolate. The protein operates within cofactor biosynthesis; (R)-pantothenate biosynthesis; (R)-pantoate from 3-methyl-2-oxobutanoate: step 1/2. In terms of biological role, catalyzes the reversible reaction in which hydroxymethyl group from 5,10-methylenetetrahydrofolate is transferred onto alpha-ketoisovalerate to form ketopantoate. In Clostridium acetobutylicum (strain ATCC 824 / DSM 792 / JCM 1419 / IAM 19013 / LMG 5710 / NBRC 13948 / NRRL B-527 / VKM B-1787 / 2291 / W), this protein is 3-methyl-2-oxobutanoate hydroxymethyltransferase.